The chain runs to 305 residues: Methionyl-tRNA formyltransferase (305 aa).

Residue 110–113 (SLLP) participates in (6S)-5,6,7,8-tetrahydrofolate binding.

This sequence belongs to the Fmt family.

It catalyses the reaction L-methionyl-tRNA(fMet) + (6R)-10-formyltetrahydrofolate = N-formyl-L-methionyl-tRNA(fMet) + (6S)-5,6,7,8-tetrahydrofolate + H(+). Functionally, attaches a formyl group to the free amino group of methionyl-tRNA(fMet). The formyl group appears to play a dual role in the initiator identity of N-formylmethionyl-tRNA by promoting its recognition by IF2 and preventing the misappropriation of this tRNA by the elongation apparatus. This is Methionyl-tRNA formyltransferase from Gluconacetobacter diazotrophicus (strain ATCC 49037 / DSM 5601 / CCUG 37298 / CIP 103539 / LMG 7603 / PAl5).